The sequence spans 175 residues: Dof zinc finger protein DOF1.5 (175 aa).

The segment at 29–57 (EEQQQQQQPELQATTAVRSPSSDLTAEKR) is disordered. The segment covering 37–52 (PELQATTAVRSPSSDL) has biased composition (polar residues). Residues 62-116 (IPCPRCKSMETKFCYFNNYNVNQPRHFCKGCQRYWTAGGALRNVPVGAGRRKSKP) form a Dof-type zinc finger. The Zn(2+) site is built by Cys64, Cys67, Cys89, and Cys92. Residues 162–168 (PVKRLRC) carry the Nuclear localization signal motif.

The protein resides in the nucleus. Transcription factor that binds specifically to a 5'-AA[AG]G-3' consensus core sequence. Acts as a negative regulator in the phytochrome-mediated light responses. Controls phyB-mediated end-of-day response and the phyA-mediated anthocyanin accumulation. Not involved in direct flowering time regulation. In Arabidopsis thaliana (Mouse-ear cress), this protein is Dof zinc finger protein DOF1.5 (DOF1.5).